Here is a 221-residue protein sequence, read N- to C-terminus: Deep sea actinoporin Cjtox II (221 aa).

A signal peptide spans 1–19; it reads MNRLIIVCLVAAMIYSTIA. A propeptide spanning residues 20 to 42 is cleaved from the precursor; it reads LPMKEDISNDERPISVNEEPVKK. Phosphocholine contacts are provided by S96, V129, S147, P149, Y175, Y179, and Y180. Positions 147–162 are trp-rich region, which is important for the binding to lipid membrane; that stretch reads SVPYDYNWYENWWNIK. The Cell attachment site, crucial for protein stability signature appears at 186–188; it reads KGD.

Belongs to the actinoporin family. Sea anemone subfamily. As to quaternary structure, octamer or nonamer in membranes. Monomer in the soluble state. Expressed in actinopharynx and in gastric filaments. Is not expressed in tentacles.

It is found in the secreted. The protein localises to the nematocyst. It localises to the target cell membrane. May be involved in digestion of prey. Pore-forming protein that forms cations-selective hydrophilic pores of around 1 nm and causes cytolysis. Pore formation is a multi-step process that involves specific recognition of membrane sphingomyelin (but neither cholesterol nor phosphatidylcholine) using aromatic rich region and adjacent phosphocholine (POC) binding site, firm binding to the membrane (mainly driven by hydrophobic interactions) accompanied by the transfer of the N-terminal region to the lipid-water interface and finally pore formation after oligomerization of monomers. Shows hemolytic activity on equine erythrocytes. Hemolysis is highly inhibited in presence of sphingomyelin, suggesting that this protein targets sphingomyelin. The sequence is that of Deep sea actinoporin Cjtox II from Cribrinopsis japonica (Deep-sea anemone).